The following is a 176-amino-acid chain: Shikimate kinase (176 aa).

17 to 24 (GMMGVGKS) contacts ATP.

Belongs to the shikimate kinase family.

The protein resides in the cytoplasm. It carries out the reaction shikimate + ATP = 3-phosphoshikimate + ADP + H(+). Its pathway is metabolic intermediate biosynthesis; chorismate biosynthesis; chorismate from D-erythrose 4-phosphate and phosphoenolpyruvate: step 5/7. The sequence is that of Shikimate kinase from Zymomonas mobilis subsp. mobilis (strain ATCC 31821 / ZM4 / CP4).